A 349-amino-acid chain; its full sequence is Short chain dehydrogenase/reductase dpfgH (349 aa).

Residues 9–31 (LCIRVVDSLYGSFLYLPLAILFL) form a helical membrane-spanning segment. 3 residues coordinate NADP(+): I65, R89, and D115. Residue N118 is glycosylated (N-linked (GlcNAc...) asparagine). 2 residues coordinate NADP(+): N142 and K164. Catalysis depends on proton donor residues S191 and S192. Positions 223 and 227 each coordinate NADP(+). The active-site Proton acceptor is the Y223. K227 functions as the Lowers pKa of active site Tyr in the catalytic mechanism. N-linked (GlcNAc...) asparagine glycosylation is present at N334.

The protein belongs to the short-chain dehydrogenases/reductases (SDR) family.

It localises to the membrane. It functions in the pathway secondary metabolite biosynthesis; terpenoid biosynthesis. Functionally, short chain dehydrogenase/reductase; part of the gene cluster that mediates the biosynthesis of diterpenoid pyrones. The first step of the pathway is the synthesis of the alpha-pyrone moiety by the polyketide synthase dpfgA via condensation of one acetyl-CoA starter unit with 3 malonyl-CoA units and 2 methylations. The alpha-pyrone is then combined with geranylgeranyl pyrophosphate (GGPP) formed by the GGPP synthase dpfgD through the action of the prenyltransferase dpfgC to yield a linear alpha-pyrone diterpenoid. Subsequent steps in the diterpenoid pyrone biosynthetic pathway involve the decalin core formation, which is initiated by the epoxidation of the C10-C11 olefin by the FAD-dependent oxidoreductase dpfgE, and is followed by a cyclization cascade catalyzed by the terpene cyclase dpfgB. The short chain dehydrogenase/reductase dpfgG then oxidizes the 8S hydroxy group to a ketone and the short chain dehydrogenase/reductase dpfgH reduces the ketone to the 8R hydroxy group to yield higginsianin B. Higginsianin B is further methylated by the methyltransferase dpfgI to produce the intermediate named FDDP B. The cytochrome P450 monooxygenase dfgpJ then catalyzes a three-step oxidation at C-27 to generate a carboxylic acid as well as C-26 hydroxylation. Finally, methyltransferase dpfgK methylates the carboxylic acid generated by dpfgJ, yielding the final diterpenoid pyrones from the pathway which were named FDDP D and FDDP E. This is Short chain dehydrogenase/reductase dpfgH from Gibberella zeae (strain ATCC MYA-4620 / CBS 123657 / FGSC 9075 / NRRL 31084 / PH-1) (Wheat head blight fungus).